The sequence spans 147 residues: 3-dehydroquinate dehydratase (147 aa).

Tyr-23 functions as the Proton acceptor in the catalytic mechanism. Residues Asn-75, His-81, and Asp-88 each coordinate substrate. His-101 (proton donor) is an active-site residue. Residues 102-103 and Arg-112 contribute to the substrate site; that span reads LS.

This sequence belongs to the type-II 3-dehydroquinase family. As to quaternary structure, homododecamer.

The enzyme catalyses 3-dehydroquinate = 3-dehydroshikimate + H2O. Its pathway is metabolic intermediate biosynthesis; chorismate biosynthesis; chorismate from D-erythrose 4-phosphate and phosphoenolpyruvate: step 3/7. In terms of biological role, catalyzes a trans-dehydration via an enolate intermediate. In Thioalkalivibrio sulfidiphilus (strain HL-EbGR7), this protein is 3-dehydroquinate dehydratase.